Consider the following 287-residue polypeptide: MSNVLARKPDWLKLRLSAHGEFAATRQLLEQRNLNTVCRSAMCPNLQECWSRGTATFLLLGNICTRTCRFCAVGTASIPPMPDSLEPENIAEAVEIMNLNHVVLTSVNRDDLADGGARHWQKTMQAVRQRNPKVTLECLIPDFQAQTEALDIVLAEAPEVLNHNIETVPSIYHIVRPEANYSSSLNIIRRAKEHFNLTTKSGLMVGMGETFDEVVQSLHDLVQHGCDMVTIGQYLQPSASHIPVNRYVTPEEFDRYKTVAESLGLRNVRSGPFVRSSYLAETLSPDH.

[4Fe-4S] cluster is bound by residues Cys-38, Cys-43, Cys-49, Cys-64, Cys-68, Cys-71, and Ser-277. Positions 50-266 constitute a Radical SAM core domain; sequence WSRGTATFLL…KTVAESLGLR (217 aa).

The protein belongs to the radical SAM superfamily. Lipoyl synthase family. It depends on [4Fe-4S] cluster as a cofactor.

It localises to the cytoplasm. The catalysed reaction is [[Fe-S] cluster scaffold protein carrying a second [4Fe-4S](2+) cluster] + N(6)-octanoyl-L-lysyl-[protein] + 2 oxidized [2Fe-2S]-[ferredoxin] + 2 S-adenosyl-L-methionine + 4 H(+) = [[Fe-S] cluster scaffold protein] + N(6)-[(R)-dihydrolipoyl]-L-lysyl-[protein] + 4 Fe(3+) + 2 hydrogen sulfide + 2 5'-deoxyadenosine + 2 L-methionine + 2 reduced [2Fe-2S]-[ferredoxin]. The protein operates within protein modification; protein lipoylation via endogenous pathway; protein N(6)-(lipoyl)lysine from octanoyl-[acyl-carrier-protein]: step 2/2. In terms of biological role, catalyzes the radical-mediated insertion of two sulfur atoms into the C-6 and C-8 positions of the octanoyl moiety bound to the lipoyl domains of lipoate-dependent enzymes, thereby converting the octanoylated domains into lipoylated derivatives. This is Lipoyl synthase from Chlorobium phaeobacteroides (strain DSM 266 / SMG 266 / 2430).